The chain runs to 404 residues: Cysteine desulfurase IscS (404 aa).

Pyridoxal 5'-phosphate contacts are provided by residues 75–76, Asn155, Gln183, and 203–205; these read AT and SAH. Lys206 is modified (N6-(pyridoxal phosphate)lysine). Thr243 provides a ligand contact to pyridoxal 5'-phosphate. The active-site Cysteine persulfide intermediate is the Cys328. Residue Cys328 coordinates [2Fe-2S] cluster.

This sequence belongs to the class-V pyridoxal-phosphate-dependent aminotransferase family. NifS/IscS subfamily. Homodimer. Forms a heterotetramer with IscU, interacts with other sulfur acceptors. Pyridoxal 5'-phosphate serves as cofactor.

The protein resides in the cytoplasm. It carries out the reaction (sulfur carrier)-H + L-cysteine = (sulfur carrier)-SH + L-alanine. It functions in the pathway cofactor biosynthesis; iron-sulfur cluster biosynthesis. Functionally, master enzyme that delivers sulfur to a number of partners involved in Fe-S cluster assembly, tRNA modification or cofactor biosynthesis. Catalyzes the removal of elemental sulfur atoms from cysteine to produce alanine. Functions as a sulfur delivery protein for Fe-S cluster synthesis onto IscU, an Fe-S scaffold assembly protein, as well as other S acceptor proteins. This Vibrio atlanticus (strain LGP32) (Vibrio splendidus (strain Mel32)) protein is Cysteine desulfurase IscS.